The primary structure comprises 214 residues: ATP phosphoribosyltransferase (214 aa).

This sequence belongs to the ATP phosphoribosyltransferase family. Short subfamily. In terms of assembly, heteromultimer composed of HisG and HisZ subunits.

It is found in the cytoplasm. The enzyme catalyses 1-(5-phospho-beta-D-ribosyl)-ATP + diphosphate = 5-phospho-alpha-D-ribose 1-diphosphate + ATP. It functions in the pathway amino-acid biosynthesis; L-histidine biosynthesis; L-histidine from 5-phospho-alpha-D-ribose 1-diphosphate: step 1/9. Its function is as follows. Catalyzes the condensation of ATP and 5-phosphoribose 1-diphosphate to form N'-(5'-phosphoribosyl)-ATP (PR-ATP). Has a crucial role in the pathway because the rate of histidine biosynthesis seems to be controlled primarily by regulation of HisG enzymatic activity. The chain is ATP phosphoribosyltransferase from Halorhodospira halophila (strain DSM 244 / SL1) (Ectothiorhodospira halophila (strain DSM 244 / SL1)).